A 276-amino-acid chain; its full sequence is uncharacterized protein (276 aa).

A run of 7 helical transmembrane segments spans residues 5–25 (TDLI…GMLA), 32–52 (PLVG…GFVG), 64–84 (GVIL…LLAV), 104–124 (AGLA…GLAL), 149–169 (IAVG…VLLP), 193–213 (LWVT…VMLV), and 244–264 (VGIA…GAFF).

Belongs to the monovalent cation:proton antiporter 2 (CPA2) transporter (TC 2.A.37) family.

It localises to the cell membrane. This is an uncharacterized protein from Methylorubrum extorquens (Methylobacterium dichloromethanicum).